Reading from the N-terminus, the 85-residue chain is Putative transmembrane protein ORF28 (85 aa).

Transmembrane regions (helical) follow at residues 32-52 (IMLL…VQIV) and 59-79 (LLSV…MLGI).

The protein resides in the host membrane. This chain is Putative transmembrane protein ORF28, found in Haloarcula hispanica (His1V).